The following is a 238-amino-acid chain: Large ribosomal subunit protein uL1 (238 aa).

Belongs to the universal ribosomal protein uL1 family. In terms of assembly, part of the 50S ribosomal subunit.

Binds directly to 23S rRNA. The L1 stalk is quite mobile in the ribosome, and is involved in E site tRNA release. In terms of biological role, protein L1 is also a translational repressor protein, it controls the translation of the L11 operon by binding to its mRNA. This chain is Large ribosomal subunit protein uL1, found in Frankia alni (strain DSM 45986 / CECT 9034 / ACN14a).